A 186-amino-acid chain; its full sequence is Acireductone dioxygenase (186 aa).

4 residues coordinate Fe(2+): His-103, His-105, Glu-109, and His-147. His-103, His-105, Glu-109, and His-147 together coordinate Ni(2+).

Belongs to the acireductone dioxygenase (ARD) family. Monomer. Fe(2+) is required as a cofactor. The cofactor is Ni(2+).

The catalysed reaction is 1,2-dihydroxy-5-(methylsulfanyl)pent-1-en-3-one + O2 = 3-(methylsulfanyl)propanoate + CO + formate + 2 H(+). The enzyme catalyses 1,2-dihydroxy-5-(methylsulfanyl)pent-1-en-3-one + O2 = 4-methylsulfanyl-2-oxobutanoate + formate + 2 H(+). Its pathway is amino-acid biosynthesis; L-methionine biosynthesis via salvage pathway; L-methionine from S-methyl-5-thio-alpha-D-ribose 1-phosphate: step 5/6. In terms of biological role, catalyzes 2 different reactions between oxygen and the acireductone 1,2-dihydroxy-3-keto-5-methylthiopentene (DHK-MTPene) depending upon the metal bound in the active site. Fe-containing acireductone dioxygenase (Fe-ARD) produces formate and 2-keto-4-methylthiobutyrate (KMTB), the alpha-ketoacid precursor of methionine in the methionine recycle pathway. Ni-containing acireductone dioxygenase (Ni-ARD) produces methylthiopropionate, carbon monoxide and formate, and does not lie on the methionine recycle pathway. The sequence is that of Acireductone dioxygenase from Parasynechococcus marenigrum (strain WH8102).